The primary structure comprises 958 residues: Probable protein phosphatase DDB_G0282105 (958 aa).

Transmembrane regions (helical) follow at residues 2 to 22 (VLMM…SLMV) and 26 to 46 (FLEF…ILFF). Positions 142–330 (SASQQSELTN…KDKERERSSS (189 aa)) form a coiled coil. The span at 312-328 (QEKEKQKLEKDKERERS) shows a compositional bias: basic and acidic residues. Disordered regions lie at residues 312-361 (QEKE…PIPI), 380-421 (SVNG…PKFK), 445-475 (HLGS…TTPI), 491-525 (ITSP…ILSP), and 619-659 (NNNN…NDNK). Composition is skewed to low complexity over residues 329–361 (SSFS…PIPI), 390–401 (SSVSPPSSSYLR), 452–475 (TPAN…TTPI), 491–515 (ITSP…SSSS), and 619–655 (NNNN…NNNK). A coiled-coil region spans residues 613–666 (NFLKTNNNNNKNNIEESNNNNNNNNNNNNNNNNNNNNNNNNNKNDNKEVNSKLE). The PPM-type phosphatase domain maps to 675-958 (KIGLRRAKKK…DNVTVIIVKL (284 aa)). Aspartate 722, glycine 723, aspartate 905, and aspartate 949 together coordinate Mn(2+).

In the C-terminal section; belongs to the PP2C family. Mg(2+) serves as cofactor. Requires Mn(2+) as cofactor.

It is found in the membrane. It catalyses the reaction O-phospho-L-seryl-[protein] + H2O = L-seryl-[protein] + phosphate. It carries out the reaction O-phospho-L-threonyl-[protein] + H2O = L-threonyl-[protein] + phosphate. The sequence is that of Probable protein phosphatase DDB_G0282105 from Dictyostelium discoideum (Social amoeba).